Consider the following 220-residue polypeptide: MGRRPARCYRQIKGKPYPKSRYCRGVPDPKIRIYDVGMKRKGVDEFPFCVHLVSWEKENVSSEALEAARIACNKYMVKSAGKDAFHLRIRVHPFHVLRINKMLSCAGADRLQTGMRGAFGKALGTCARVAIGQVLLSVRCKDAHGHHAQEALRRAKFKFPGRQKIIVSRKWGFTKFNRADFTKLRQEKRVVPDGVNAKFLSCHGPLANRQPGSAFLPAHY.

This sequence belongs to the universal ribosomal protein uL16 family. Component of the small ribosomal subunit. Mature ribosomes consist of a small (40S) and a large (60S) subunit. The 40S subunit contains about 33 different proteins and 1 molecule of RNA (18S). The 60S subunit contains about 49 different proteins and 3 molecules of RNA (25S, 5.8S and 5S). Interacts with NIK1. Interacts with LIMYB. In terms of processing, phosphorylated by NIK1 and NIK2 in vitro. As to expression, ubiquitous, with the highest expression in flowers. Expressed in seedlings, leaves, roots, stems and flowers. Expressed in young leaves, mostly in dividing cells and in the hydathodes, in the root tips and lateral root primordia, in pistils, anthers, and pollen grains, and in developing seeds.

The protein localises to the cytoplasm. Its subcellular location is the nucleus. Ribosomal protein involved in translational regulation. Contribute to general translation under UV-B stress. Involved in the NIK1-mediated defense response to geminivirus infection. Acts coordinately with LIMYB as a transcriptional repressor. This chain is Large ribosomal subunit protein uL16z, found in Arabidopsis thaliana (Mouse-ear cress).